Consider the following 290-residue polypeptide: 4-hydroxy-3-methylbut-2-enyl diphosphate reductase (290 aa).

Cysteine 13 provides a ligand contact to [4Fe-4S] cluster. (2E)-4-hydroxy-3-methylbut-2-enyl diphosphate is bound by residues histidine 41 and histidine 75. Histidine 41 and histidine 75 together coordinate dimethylallyl diphosphate. The isopentenyl diphosphate site is built by histidine 41 and histidine 75. Cysteine 97 provides a ligand contact to [4Fe-4S] cluster. (2E)-4-hydroxy-3-methylbut-2-enyl diphosphate is bound at residue histidine 129. Residue histidine 129 coordinates dimethylallyl diphosphate. Histidine 129 contributes to the isopentenyl diphosphate binding site. Glutamate 131 serves as the catalytic Proton donor. Threonine 167 contacts (2E)-4-hydroxy-3-methylbut-2-enyl diphosphate. Cysteine 198 serves as a coordination point for [4Fe-4S] cluster. Positions 226, 227, 228, and 270 each coordinate (2E)-4-hydroxy-3-methylbut-2-enyl diphosphate. Dimethylallyl diphosphate is bound by residues serine 226, serine 227, asparagine 228, and serine 270. 4 residues coordinate isopentenyl diphosphate: serine 226, serine 227, asparagine 228, and serine 270.

It belongs to the IspH family. Requires [4Fe-4S] cluster as cofactor.

The enzyme catalyses isopentenyl diphosphate + 2 oxidized [2Fe-2S]-[ferredoxin] + H2O = (2E)-4-hydroxy-3-methylbut-2-enyl diphosphate + 2 reduced [2Fe-2S]-[ferredoxin] + 2 H(+). The catalysed reaction is dimethylallyl diphosphate + 2 oxidized [2Fe-2S]-[ferredoxin] + H2O = (2E)-4-hydroxy-3-methylbut-2-enyl diphosphate + 2 reduced [2Fe-2S]-[ferredoxin] + 2 H(+). It participates in isoprenoid biosynthesis; dimethylallyl diphosphate biosynthesis; dimethylallyl diphosphate from (2E)-4-hydroxy-3-methylbutenyl diphosphate: step 1/1. The protein operates within isoprenoid biosynthesis; isopentenyl diphosphate biosynthesis via DXP pathway; isopentenyl diphosphate from 1-deoxy-D-xylulose 5-phosphate: step 6/6. Catalyzes the conversion of 1-hydroxy-2-methyl-2-(E)-butenyl 4-diphosphate (HMBPP) into a mixture of isopentenyl diphosphate (IPP) and dimethylallyl diphosphate (DMAPP). Acts in the terminal step of the DOXP/MEP pathway for isoprenoid precursor biosynthesis. The polypeptide is 4-hydroxy-3-methylbut-2-enyl diphosphate reductase (Parabacteroides distasonis (strain ATCC 8503 / DSM 20701 / CIP 104284 / JCM 5825 / NCTC 11152)).